Here is a 566-residue protein sequence, read N- to C-terminus: Oxygen-dependent choline dehydrogenase (566 aa).

Position 7–36 (7–36 (DYIICGAGSAGNVLATRLTEDPNVTVLLLE)) interacts with FAD. The segment at 182-204 (YQQEGFGPMDRTVTPKGRRASTA) is disordered. H474 functions as the Proton acceptor in the catalytic mechanism.

The protein belongs to the GMC oxidoreductase family. Requires FAD as cofactor.

It carries out the reaction choline + A = betaine aldehyde + AH2. The enzyme catalyses betaine aldehyde + NAD(+) + H2O = glycine betaine + NADH + 2 H(+). It participates in amine and polyamine biosynthesis; betaine biosynthesis via choline pathway; betaine aldehyde from choline (cytochrome c reductase route): step 1/1. Functionally, involved in the biosynthesis of the osmoprotectant glycine betaine. Catalyzes the oxidation of choline to betaine aldehyde and betaine aldehyde to glycine betaine at the same rate. In Burkholderia multivorans (strain ATCC 17616 / 249), this protein is Oxygen-dependent choline dehydrogenase.